A 213-amino-acid polypeptide reads, in one-letter code: Orotate phosphoribosyltransferase (213 aa).

5-phospho-alpha-D-ribose 1-diphosphate is bound at residue Lys-26. 34–35 (FF) serves as a coordination point for orotate. 5-phospho-alpha-D-ribose 1-diphosphate is bound by residues 72 to 73 (YK), Arg-99, Lys-100, Lys-103, His-105, and 124 to 132 (DDVITAGTA). Residues Thr-128 and Arg-156 each contribute to the orotate site.

The protein belongs to the purine/pyrimidine phosphoribosyltransferase family. PyrE subfamily. As to quaternary structure, homodimer. Requires Mg(2+) as cofactor.

It catalyses the reaction orotidine 5'-phosphate + diphosphate = orotate + 5-phospho-alpha-D-ribose 1-diphosphate. The protein operates within pyrimidine metabolism; UMP biosynthesis via de novo pathway; UMP from orotate: step 1/2. In terms of biological role, catalyzes the transfer of a ribosyl phosphate group from 5-phosphoribose 1-diphosphate to orotate, leading to the formation of orotidine monophosphate (OMP). The sequence is that of Orotate phosphoribosyltransferase from Erwinia tasmaniensis (strain DSM 17950 / CFBP 7177 / CIP 109463 / NCPPB 4357 / Et1/99).